The primary structure comprises 250 residues: Capsid protein (250 aa).

A disordered region spans residues Met1 to Lys31. The short motif at Lys3–Ser19 is the Bipartite nuclear localization signal element. The span at Ser14–Lys31 shows a compositional bias: polar residues. A Nuclear localization signal motif is present at residues Lys34 to Arg48. A zinc finger lies at Tyr53–Ser70. Residues Ile95 to Met116 carry the Nuclear export signal motif. Residues Arg194 to Arg241 carry the Bipartite nuclear localization signal motif.

Belongs to the geminiviridae capsid protein family. As to quaternary structure, homomultimer. Binds to single-stranded and double-stranded viral DNA. Interacts (via nuclear localization signals) with host importin alpha-1a.

It localises to the virion. Its subcellular location is the host nucleus. In terms of biological role, encapsidates the viral DNA into characteristic twinned ('geminate') particles. Binds the genomic viral ssDNA and shuttles it into and out of the cell nucleus. The CP of bipartite geminiviruses is not required for cell-to-cell or systemic movement. The chain is Capsid protein from Bean golden yellow mosaic virus (isolate Puerto Rico) (BGYMV).